The sequence spans 138 residues: Acidic phospholipase A2 BthA-1 (138 aa).

The signal sequence occupies residues 1-16 (MRTLWIMAVLLVGVEG). Cystine bridges form between Cys-42-Cys-131, Cys-44-Cys-60, Cys-59-Cys-111, Cys-65-Cys-138, Cys-66-Cys-104, Cys-73-Cys-97, and Cys-91-Cys-102. Ca(2+)-binding residues include Tyr-43, Gly-47, and Gly-48. The active site involves His-63. A Ca(2+)-binding site is contributed by Asp-64. The active site involves Asp-105.

This sequence belongs to the phospholipase A2 family. Group II subfamily. D49 sub-subfamily. As to quaternary structure, homodimer; non-covalently linked. It depends on Ca(2+) as a cofactor. In terms of tissue distribution, expressed by the venom gland.

The protein localises to the secreted. The catalysed reaction is a 1,2-diacyl-sn-glycero-3-phosphocholine + H2O = a 1-acyl-sn-glycero-3-phosphocholine + a fatty acid + H(+). Inhibited by EDTA and bromophenacyl bromide (BPB). In terms of biological role, snake venom phospholipase A2 (PLA2) that displays edema-inducing activities (activity that is inhibited by EDTA and dexamethasone), inhibits phospholipid-dependent collagen/ADP-induced platelet aggregation, possess hypotensive as well as anticoagulant activities. In addition, this enzyme shows bactericidal activity against E.coli and S.aureus. PLA2 catalyzes the calcium-dependent hydrolysis of the 2-acyl groups in 3-sn-phosphoglycerides. The chain is Acidic phospholipase A2 BthA-1 from Bothrops jararacussu (Jararacussu).